A 1251-amino-acid polypeptide reads, in one-letter code: Topoisomerase 1-associated factor 1 (1251 aa).

Disordered regions lie at residues 328–354, 564–601, 901–1021, and 1041–1251; these read ERKM…KDLG, RRKK…KTSQ, RRKT…YEGN, and ATFG…SDEE. The segment covering 344–354 has biased composition (basic and acidic residues); the sequence is RKEDMEPKDLG. The span at 576 to 591 shows a compositional bias: acidic residues; the sequence is QGDDEGQGDAEDDSAD. Basic and acidic residues-rich tracts occupy residues 592–601 and 985–1011; these read DERQAEKTSQ and AEAR…YVDP. Composition is skewed to acidic residues over residues 1069-1079 and 1103-1122; these read DGDDGEGEDAV and GGED…EEDG. Positions 1123–1136 are enriched in low complexity; that stretch reads SAVSEAEAPAAAGR. Residues 1137-1151 are compositionally biased toward basic residues; sequence RPNKRRKPAQKKKKR. Acidic residues predominate over residues 1157–1179; that stretch reads SGEDDDVGMDMDVDVDADADADA. The segment covering 1182-1205 has biased composition (polar residues); it reads FTQSSKDGAVTNDTPLSSDPSRTT.

This sequence belongs to the timeless family. Component of the fork protection complex (FPC) consisting of TOF1 and CSM3.

The protein localises to the nucleus. Forms a fork protection complex (FPC) with CSM3 and which is required for chromosome segregation during meiosis and DNA damage repair. FPC coordinates leading and lagging strand synthesis and moves with the replication fork. FPC stabilizes replication forks in a configuration that is recognized by replication checkpoint sensors. The sequence is that of Topoisomerase 1-associated factor 1 (TOF1) from Chaetomium globosum (strain ATCC 6205 / CBS 148.51 / DSM 1962 / NBRC 6347 / NRRL 1970) (Soil fungus).